The sequence spans 308 residues: MNDTIPATGHLLGAADIRRIAADAGISPTKKFGQNFVIDPGTVRRIVREAGVTAADHVMEVGPGLGSLTLAILETGATMTAVEIDPPLAERLPGTVAEFMPEATSRLTVVNRDALTVTPENVPDFSDDASFTLVANLPYNVATPILLTLLERFDNLGSFLVMVQKEVADRLAAKPGSKIYGTPSVKLAWYGTAERVGTIGRNVFWPAPNVDSALVRFTRYQADDPAAPGASNSTADGGTQRELVFRLIDAAFGQRRKTLHAALKTIAPSEAFSIAGIDPTRRGETLTIAEFTALAKAIESCGDGDEAQ.

Residues asparagine 35, valine 37, glycine 62, glutamate 83, aspartate 113, and asparagine 136 each coordinate S-adenosyl-L-methionine.

This sequence belongs to the class I-like SAM-binding methyltransferase superfamily. rRNA adenine N(6)-methyltransferase family. RsmA subfamily.

Its subcellular location is the cytoplasm. The catalysed reaction is adenosine(1518)/adenosine(1519) in 16S rRNA + 4 S-adenosyl-L-methionine = N(6)-dimethyladenosine(1518)/N(6)-dimethyladenosine(1519) in 16S rRNA + 4 S-adenosyl-L-homocysteine + 4 H(+). Functionally, specifically dimethylates two adjacent adenosines (A1518 and A1519) in the loop of a conserved hairpin near the 3'-end of 16S rRNA in the 30S particle. May play a critical role in biogenesis of 30S subunits. This chain is Ribosomal RNA small subunit methyltransferase A, found in Bifidobacterium longum (strain NCC 2705).